The chain runs to 162 residues: Circumsporozoite protein-related antigen (162 aa).

A signal peptide spans 1-16; the sequence is MKILSVFFLALFFIIF. Disordered regions lie at residues 24–44 and 109–162; these read KTNK…KGSG and PFKI…GPEH. The span at 114-130 shows a compositional bias: low complexity; that stretch reads SSDPADNANPDADSESN. A compositionally biased stretch (polar residues) spans 137-162; it reads PQVTAQDVTPEQPQGDDNNLVSGPEH.

The polypeptide is Circumsporozoite protein-related antigen (Plasmodium falciparum).